The primary structure comprises 236 residues: Small ribosomal subunit protein uS2c (236 aa).

Belongs to the universal ribosomal protein uS2 family.

The protein resides in the plastid. Its subcellular location is the chloroplast. The chain is Small ribosomal subunit protein uS2c (rps2) from Triticum aestivum (Wheat).